The following is a 142-amino-acid chain: Holo-[acyl-carrier-protein] synthase (142 aa).

The Mg(2+) site is built by aspartate 8 and glutamate 57.

This sequence belongs to the P-Pant transferase superfamily. AcpS family. The cofactor is Mg(2+).

It is found in the cytoplasm. The catalysed reaction is apo-[ACP] + CoA = holo-[ACP] + adenosine 3',5'-bisphosphate + H(+). Its function is as follows. Transfers the 4'-phosphopantetheine moiety from coenzyme A to a Ser of acyl-carrier-protein. This chain is Holo-[acyl-carrier-protein] synthase, found in Maricaulis maris (strain MCS10) (Caulobacter maris).